The following is a 204-amino-acid chain: Recombination protein RecR (204 aa).

The segment at Cys-59–Cys-74 adopts a C4-type zinc-finger fold. The 100-residue stretch at Thr-82 to Pro-181 folds into the Toprim domain.

Belongs to the RecR family.

Functionally, may play a role in DNA repair. It seems to be involved in an RecBC-independent recombinational process of DNA repair. It may act with RecF and RecO. In Cupriavidus metallidurans (strain ATCC 43123 / DSM 2839 / NBRC 102507 / CH34) (Ralstonia metallidurans), this protein is Recombination protein RecR.